The following is a 192-amino-acid chain: Large ribosomal subunit protein bL25 (192 aa).

It belongs to the bacterial ribosomal protein bL25 family. CTC subfamily. In terms of assembly, part of the 50S ribosomal subunit; part of the 5S rRNA/L5/L18/L25 subcomplex. Contacts the 5S rRNA. Binds to the 5S rRNA independently of L5 and L18.

This is one of the proteins that binds to the 5S RNA in the ribosome where it forms part of the central protuberance. The protein is Large ribosomal subunit protein bL25 of Cytophaga hutchinsonii (strain ATCC 33406 / DSM 1761 / CIP 103989 / NBRC 15051 / NCIMB 9469 / D465).